Here is a 214-residue protein sequence, read N- to C-terminus: Adenylate kinase (214 aa).

10 to 15 (GAGKGT) is an ATP binding site. The interval 30 to 59 (STGDILRAAVKDMTPMGGKAKSFMDAGALV) is NMP. Residues T31, R36, 57–59 (ALV), 85–88 (GFPR), and Q92 contribute to the AMP site. The segment at 126 to 163 (GRRTCRNCGKGFHVSFDPPKSSGICDECSGELYQRDDD) is LID. R127 provides a ligand contact to ATP. Residues C130, C133, C150, and C153 each coordinate Zn(2+). 2 residues coordinate AMP: R160 and R171. G199 serves as a coordination point for ATP.

Belongs to the adenylate kinase family. In terms of assembly, monomer.

The protein localises to the cytoplasm. It carries out the reaction AMP + ATP = 2 ADP. Its pathway is purine metabolism; AMP biosynthesis via salvage pathway; AMP from ADP: step 1/1. In terms of biological role, catalyzes the reversible transfer of the terminal phosphate group between ATP and AMP. Plays an important role in cellular energy homeostasis and in adenine nucleotide metabolism. This Geotalea daltonii (strain DSM 22248 / JCM 15807 / FRC-32) (Geobacter daltonii) protein is Adenylate kinase.